We begin with the raw amino-acid sequence, 717 residues long: ATP-dependent zinc metalloprotease FtsH (717 aa).

Residues 1 to 7 are Cytoplasmic-facing; that stretch reads MFKDKKM. A helical transmembrane segment spans residues 8–28; that stretch reads LKYIVIYSIIAFGILLTFNMV. Residues 29 to 109 are Extracellular-facing; the sequence is KDEMLYEKVD…VEFNVTKPEN (81 aa). Residues 110-130 form a helical membrane-spanning segment; that stretch reads YQLLGLLMSWVFPLILIFFVG. The Cytoplasmic portion of the chain corresponds to 131 to 717; the sequence is RMMFSKMNNK…SSTNNKVDGE (587 aa). 206–213 serves as a coordination point for ATP; that stretch reads GPPGTGKT. A Zn(2+)-binding site is contributed by His427. Glu428 is a catalytic residue. Zn(2+) contacts are provided by His431 and Asp504. The disordered stretch occupies residues 670 to 717; that stretch reads KLARANNEANNDALDSSKENEEVKSNVNDGATEEKKDDSSTNNKVDGE. 2 stretches are compositionally biased toward basic and acidic residues: residues 684-693 and 701-717; these read DSSKENEEVK and TEEK…VDGE.

This sequence in the central section; belongs to the AAA ATPase family. The protein in the C-terminal section; belongs to the peptidase M41 family. As to quaternary structure, homohexamer. It depends on Zn(2+) as a cofactor.

The protein localises to the cell membrane. Its function is as follows. Acts as a processive, ATP-dependent zinc metallopeptidase for both cytoplasmic and membrane proteins. Plays a role in the quality control of integral membrane proteins. This is ATP-dependent zinc metalloprotease FtsH from Clostridium perfringens (strain ATCC 13124 / DSM 756 / JCM 1290 / NCIMB 6125 / NCTC 8237 / Type A).